A 160-amino-acid chain; its full sequence is Small ribosomal subunit protein uS7 (160 aa).

It belongs to the universal ribosomal protein uS7 family. As to quaternary structure, part of the 30S ribosomal subunit. Contacts proteins S9 and S11.

Its function is as follows. One of the primary rRNA binding proteins, it binds directly to 16S rRNA where it nucleates assembly of the head domain of the 30S subunit. Is located at the subunit interface close to the decoding center, probably blocks exit of the E-site tRNA. The protein is Small ribosomal subunit protein uS7 of Rickettsia typhi (strain ATCC VR-144 / Wilmington).